The chain runs to 64 residues: Large ribosomal subunit protein bL35 (64 aa).

This sequence belongs to the bacterial ribosomal protein bL35 family.

The polypeptide is Large ribosomal subunit protein bL35 (Shewanella sediminis (strain HAW-EB3)).